A 101-amino-acid chain; its full sequence is DET1- and DDB1-associated protein 1 (101 aa).

The disordered stretch occupies residues asparagine 67–threonine 101.

It belongs to the DDA1 family. As to quaternary structure, component of numerous DCX (DDB1-CUL4-X-box) E3 ubiquitin-protein ligase complexes which consist of a core of DDB1, cullin-4 (CUL4A or CUL4B), DDA1 and RBX1.

The protein operates within protein modification; protein ubiquitination. In terms of biological role, functions as a component of numerous distinct DCX (DDB1-CUL4-X-box) E3 ubiquitin-protein ligase complexes which mediate the ubiquitination and subsequent proteasomal degradation of target proteins. In the DCX complexes, acts as a scaffolding subunit required to stabilize the complex. This Xenopus laevis (African clawed frog) protein is DET1- and DDB1-associated protein 1.